A 153-amino-acid polypeptide reads, in one-letter code: Histone H2B.10 (153 aa).

2 stretches are compositionally biased toward basic and acidic residues: residues 1–28 (MAPKAEKKPAAKKPAEEEPAAEKAEKAL) and 36–53 (EKRLPAGKAEKSSGEGKK). The disordered stretch occupies residues 1–61 (MAPKAEKKPA…KKAGRKKAKK (61 aa)). N6-acetyllysine is present on residues K7 and K37. K149 is covalently cross-linked (Glycyl lysine isopeptide (Lys-Gly) (interchain with G-Cter in ubiquitin)).

It belongs to the histone H2B family. In terms of assembly, the nucleosome is a histone octamer containing two molecules each of H2A, H2B, H3 and H4 assembled in one H3-H4 heterotetramer and two H2A-H2B heterodimers. The octamer wraps approximately 147 bp of DNA. Can be acetylated to form H2BK6ac and H2BK33ac. Post-translationally, monoubiquitinated by BRE1 to form H2BK143ub1 and deubiquitinated by UBP26. Required for heterochromatic histone H3 di- and trimethylation at H3K4me. May give a specific tag for epigenetic transcriptional activation.

It localises to the nucleus. The protein resides in the chromosome. Functionally, core component of nucleosome. Nucleosomes wrap and compact DNA into chromatin, limiting DNA accessibility to the cellular machineries which require DNA as a template. Histones thereby play a central role in transcription regulation, DNA repair, DNA replication and chromosomal stability. DNA accessibility is regulated via a complex set of post-translational modifications of histones, also called histone code, and nucleosome remodeling. This Oryza sativa subsp. japonica (Rice) protein is Histone H2B.10 (H2B.10).